The following is a 304-amino-acid chain: GTPase Era (304 aa).

Residues 11 to 179 enclose the Era-type G domain; that stretch reads YCGFIAIVGR…QKIVRKSLRE (169 aa). Residues 19 to 26 form a G1 region; the sequence is GRPNVGKS. 19–26 is a binding site for GTP; the sequence is GRPNVGKS. Positions 45 to 49 are G2; the sequence is QTTRH. A G3 region spans residues 66–69; sequence DTPG. GTP is bound by residues 66–70 and 128–131; these read DTPGL and NKVD. The interval 128-131 is G4; that stretch reads NKVD. The interval 158–160 is G5; that stretch reads ISA. The region spanning 210 to 287 is the KH type-2 domain; it reads TGEELPYSVT…HLELWVKVKA (78 aa).

This sequence belongs to the TRAFAC class TrmE-Era-EngA-EngB-Septin-like GTPase superfamily. Era GTPase family. Monomer.

It is found in the cytoplasm. The protein localises to the cell inner membrane. An essential GTPase that binds both GDP and GTP, with rapid nucleotide exchange. Plays a role in 16S rRNA processing and 30S ribosomal subunit biogenesis and possibly also in cell cycle regulation and energy metabolism. In Actinobacillus pleuropneumoniae serotype 3 (strain JL03), this protein is GTPase Era.